The chain runs to 299 residues: F-actin-capping protein subunit alpha-3 (299 aa).

Phosphoserine is present on Ser290.

The protein belongs to the F-actin-capping protein alpha subunit family. In terms of assembly, component of the F-actin capping complex, composed of a heterodimer of an alpha and a beta subunit. Component of the WASH complex, composed of F-actin-capping protein subunit alpha (CAPZA1, CAPZA2 or CAPZA3), F-actin-capping protein subunit beta (CAPZB), WASHC1, WASHC2, WASHC3, WASHC4 and WASHC5.

Functionally, F-actin-capping proteins bind in a Ca(2+)-independent manner to the fast growing ends of actin filaments (barbed end) thereby blocking the exchange of subunits at these ends. Unlike other capping proteins (such as gelsolin and severin), these proteins do not sever actin filaments. May play a role in the morphogenesis of spermatid. The chain is F-actin-capping protein subunit alpha-3 (CAPZA3) from Macaca fascicularis (Crab-eating macaque).